The following is a 902-amino-acid chain: Cysteine-tryptophan domain-containing zinc finger protein 3 (902 aa).

The CW-type zinc finger occupies 21-74 (VLIEDNWVCCDMCHKWRLLPYGTNTSMLPKKWICSMLDWLPGMNKCDISEDETT). Cys30, Cys33, Cys54, and Cys66 together coordinate Zn(2+). 4 disordered regions span residues 131–233 (EHDQ…EDRH), 326–345 (EDNR…NENL), 420–480 (QSST…LNAD), and 537–651 (HGPT…SASP). Basic and acidic residues-rich tracts occupy residues 151-169 (KNRE…DPVS) and 193-203 (SHSDGGDLTEK). The span at 204-213 (SKKHSKSKNR) shows a compositional bias: basic residues. 2 stretches are compositionally biased toward basic and acidic residues: residues 214-233 (RGID…EDRH) and 335-345 (HTSKGGDNENL). The span at 421-433 (SSTVATSSSSKVS) shows a compositional bias: low complexity. Composition is skewed to polar residues over residues 450–463 (ESVS…SNTD), 564–588 (NSAP…QIEM), and 599–611 (IDNQ…IGQD). Residues 612–625 (NHSHMKEGKSEVHT) show a composition bias toward basic and acidic residues. Over residues 634 to 648 (KNHTQLRSNVENGDS) the composition is skewed to polar residues.

As to expression, expressed in leaf sheaths, flag leaves, nodes, internodes and panicles.

It localises to the nucleus. Its function is as follows. Binds to histones H3K4me1, H3K4me2 and H3K4me3 in GST pull-down assay. May facilitate the recruitment of effectors to mediate gene expression. This Oryza sativa subsp. japonica (Rice) protein is Cysteine-tryptophan domain-containing zinc finger protein 3.